Consider the following 123-residue polypeptide: Small ribosomal subunit protein uS13c (123 aa).

A disordered region spans residues 89–123; that stretch reads RGKRHRNNLPVRGQRTRTNARSRRGSKKTVTGKKK. The segment covering 102–123 has biased composition (basic residues); it reads QRTRTNARSRRGSKKTVTGKKK.

The protein belongs to the universal ribosomal protein uS13 family. In terms of assembly, part of the 30S ribosomal subunit.

It localises to the plastid. It is found in the chloroplast. Located at the top of the head of the 30S subunit, it contacts several helices of the 16S rRNA. This Phaeodactylum tricornutum (strain CCAP 1055/1) protein is Small ribosomal subunit protein uS13c.